The following is a 683-amino-acid chain: MGLPEDVAKRAAWYRSELERHSYAYYVLDAPTIPDTEYDKLFRELQELEQQYPELLTADSPTHRVGGVPLKEFPPRQHGVPMLSLNNAFAPEEVEAFDKRIRDGLETIAAVDYAVEPKFDGLAISLTYENGVFTCGATRGDGVTGEEVTPNLRTLRCIPLRLRGEGWPALIEIRGEVLMFKADFAELNARQRERGDKEFANPRNAAAGSLRQLDSKITAGRPLSFFAYGVGAGADALAVKTHGEMMGLLAAWGFPVAEERRVVQGVRGLLGYFVEIGVKRPGLPYDIDGVVYKVNRLDWQAQLGFVSRAPRFAIAHKFPAEEALTEVLGIDVQVGRTGAITPVARLKPVFVGGVTVTNATLHNEDEVRRKDVRLGDTVIVRRAGDVIPEVVAIVPEKRPMRDLFGSEPLNPPFELPATCPECGSAVVKGDDEAIARCTGGLYCPAQRKQALWHFAARRAMDIEGLGDKLVDQLVDAGLVHSPADLYGLTVETLAGLERMGEKSAQNLVAAIDKSRQTTLARFIFGLGIRNVGEATARDLAKHFGGLDALLAADSAALQMVPDVGPVVAESLAAFFAEAHNREVIDGLRRAGVSWPEGEPAQAGPQLLAGKTLVLTGTLPTLKRDEAKALVEAAGGKVAGSVSKKTDYVVAGEEAGSKLEKAQELGVPVIDEAELMKLLAKGVE.

Residues 35 to 39 (DTEYD), 84 to 85 (SL), and Glu-116 each bind NAD(+). The active-site N6-AMP-lysine intermediate is Lys-118. NAD(+) is bound by residues Arg-139, Glu-176, Lys-293, and Lys-317. 4 residues coordinate Zn(2+): Cys-419, Cys-422, Cys-437, and Cys-443. The 82-residue stretch at 602–683 (AGPQLLAGKT…LMKLLAKGVE (82 aa)) folds into the BRCT domain.

This sequence belongs to the NAD-dependent DNA ligase family. LigA subfamily. It depends on Mg(2+) as a cofactor. Mn(2+) is required as a cofactor.

The catalysed reaction is NAD(+) + (deoxyribonucleotide)n-3'-hydroxyl + 5'-phospho-(deoxyribonucleotide)m = (deoxyribonucleotide)n+m + AMP + beta-nicotinamide D-nucleotide.. In terms of biological role, DNA ligase that catalyzes the formation of phosphodiester linkages between 5'-phosphoryl and 3'-hydroxyl groups in double-stranded DNA using NAD as a coenzyme and as the energy source for the reaction. It is essential for DNA replication and repair of damaged DNA. This is DNA ligase from Dechloromonas aromatica (strain RCB).